The primary structure comprises 284 residues: GTP cyclohydrolase MptA (284 aa).

Belongs to the GTP cyclohydrolase IV family. Homodimer. The cofactor is Fe(2+).

The enzyme catalyses GTP + H2O = 7,8-dihydroneopterin 2',3'-cyclic phosphate + formate + diphosphate + H(+). It functions in the pathway cofactor biosynthesis; 5,6,7,8-tetrahydromethanopterin biosynthesis. Functionally, converts GTP to 7,8-dihydro-D-neopterin 2',3'-cyclic phosphate, the first intermediate in the biosynthesis of coenzyme methanopterin. This is GTP cyclohydrolase MptA from Thermoplasma volcanium (strain ATCC 51530 / DSM 4299 / JCM 9571 / NBRC 15438 / GSS1).